The following is a 730-amino-acid chain: Envelope glycoprotein H (730 aa).

Positions 1–21 are cleaved as a signal peptide; the sequence is MQGLAFLAALACWRCISLTCG. At 22 to 706 the chain is on the virion surface side; sequence ATGALPTTAT…MYRRRAASAL (685 aa). Asparagine 46, asparagine 54, asparagine 101, asparagine 125, asparagine 131, asparagine 188, asparagine 209, asparagine 215, asparagine 267, asparagine 274, asparagine 365, asparagine 556, asparagine 613, asparagine 626, and asparagine 688 each carry an N-linked (GlcNAc...) asparagine; by host glycan. The interval 190 to 254 is interaction with gL; that stretch reads SGVALYGVVS…RNAKYALVAI (65 aa). Residues 707–727 traverse the membrane as a helical segment; sequence FLILSFIGFSGVIYFLYRLFS. At 728–730 the chain is on the intravirion side; that stretch reads ILY.

This sequence belongs to the herpesviridae glycoprotein H family. As to quaternary structure, interacts with glycoprotein L (gL); this interaction is necessary for the correct processing and cell surface expression of gH. The heterodimer gH/gL seems to interact with gB trimers during fusion. When in complex with gL, interacts with host EPHA2; this interaction triggers EPHA2 phosphorylation and endocytosis allowing KSHV entry. N-glycosylated, O-glycosylated, and sialylated.

The protein localises to the virion membrane. Its subcellular location is the host cell membrane. It localises to the host endosome membrane. Its function is as follows. The heterodimer glycoprotein H-glycoprotein L is required for the fusion of viral and plasma membranes leading to virus entry into the host cell. Following initial binding to host receptor, membrane fusion is mediated by the fusion machinery composed of gB and the heterodimer gH/gL. May also be involved in the fusion between the virion envelope and the outer nuclear membrane during virion morphogenesis. Targets host EPHA2 to promote KSHV entry. The polypeptide is Envelope glycoprotein H (Homo sapiens (Human)).